We begin with the raw amino-acid sequence, 740 residues long: Dipeptidyl peptidase family member 6 (740 aa).

M1 is a topological domain (cytoplasmic). A helical; Signal-anchor for type II membrane protein membrane pass occupies residues 2–22; that stretch reads LFLPILILNLLIITHAIDIIP. Topologically, residues 23 to 740 are lumenal; it reads REVLFQDPKY…VMNRIFPVQG (718 aa). 3 N-linked (GlcNAc...) asparagine glycosylation sites follow: N108, N308, and N506. Active-site charge relay system residues include S516, D604, and H636. An intrachain disulfide couples C535 to C658. A glycan (N-linked (GlcNAc...) asparagine) is linked at N672.

Belongs to the peptidase S9B family. DPPIV subfamily.

Its subcellular location is the cell membrane. Removes N-terminal dipeptides sequentially from polypeptides. Essential for control of distal tip cell migration. The sequence is that of Dipeptidyl peptidase family member 6 (dpf-6) from Caenorhabditis elegans.